The chain runs to 140 residues: Large ribosomal subunit protein uL16 (140 aa).

The span at methionine 1–arginine 16 shows a compositional bias: basic residues. Residues methionine 1 to aspartate 20 form a disordered region.

It belongs to the universal ribosomal protein uL16 family. As to quaternary structure, part of the 50S ribosomal subunit.

Binds 23S rRNA and is also seen to make contacts with the A and possibly P site tRNAs. This chain is Large ribosomal subunit protein uL16, found in Geobacter sulfurreducens (strain ATCC 51573 / DSM 12127 / PCA).